The primary structure comprises 377 residues: MSMNHIRPWRNIERRKSRQIHVGNVPVGGDAPIAVQTMTNTLTTDIKGTIAQVQAAADAGADIVRVSVPDEASARALKEIVRESPVPIVADIHFHYKRGIEAAEAGAACLRINPGNIGDEKRVAEVIKAARDHNCSIRIGVNAGSLEKHLLEKYGEPCPDAMVESGLDHIKILQDHDFHEFKISVKASDVFMSAAAYQMLADATDAPIHLGITEAGGLMSGTIKSAIGLGQLLWMGIGDTLRVSLSADPVEEVKVGFEILKSLGLRHRGVNIISCPSCARQGFDVIKTVETLEERLEHIKTPMSLSIIGCVVNGPGEALMTDVGFTGGGAGSGMVYLAGKASHKMSNDQMIDHIVEEVEKKAAALDAQAAEDMKAAE.

Residues Cys275, Cys278, Cys310, and Glu317 each contribute to the [4Fe-4S] cluster site.

Belongs to the IspG family. The cofactor is [4Fe-4S] cluster.

It catalyses the reaction (2E)-4-hydroxy-3-methylbut-2-enyl diphosphate + oxidized [flavodoxin] + H2O + 2 H(+) = 2-C-methyl-D-erythritol 2,4-cyclic diphosphate + reduced [flavodoxin]. It participates in isoprenoid biosynthesis; isopentenyl diphosphate biosynthesis via DXP pathway; isopentenyl diphosphate from 1-deoxy-D-xylulose 5-phosphate: step 5/6. In terms of biological role, converts 2C-methyl-D-erythritol 2,4-cyclodiphosphate (ME-2,4cPP) into 1-hydroxy-2-methyl-2-(E)-butenyl 4-diphosphate. In Ruegeria sp. (strain TM1040) (Silicibacter sp.), this protein is 4-hydroxy-3-methylbut-2-en-1-yl diphosphate synthase (flavodoxin).